The following is a 277-amino-acid chain: Thymidylate synthase (277 aa).

Arg-21 contacts dUMP. His-51 is a binding site for (6R)-5,10-methylene-5,6,7,8-tetrahydrofolate. 126–127 is a dUMP binding site; that stretch reads RR. The Nucleophile role is filled by Cys-159. DUMP contacts are provided by residues 179–182, Asn-190, and 220–222; these read RSSD and HAY. Asp-182 contacts (6R)-5,10-methylene-5,6,7,8-tetrahydrofolate. Ala-276 contributes to the (6R)-5,10-methylene-5,6,7,8-tetrahydrofolate binding site.

The protein belongs to the thymidylate synthase family. Bacterial-type ThyA subfamily. As to quaternary structure, homodimer.

The protein localises to the cytoplasm. It catalyses the reaction dUMP + (6R)-5,10-methylene-5,6,7,8-tetrahydrofolate = 7,8-dihydrofolate + dTMP. It participates in pyrimidine metabolism; dTTP biosynthesis. In terms of biological role, catalyzes the reductive methylation of 2'-deoxyuridine-5'-monophosphate (dUMP) to 2'-deoxythymidine-5'-monophosphate (dTMP) while utilizing 5,10-methylenetetrahydrofolate (mTHF) as the methyl donor and reductant in the reaction, yielding dihydrofolate (DHF) as a by-product. This enzymatic reaction provides an intracellular de novo source of dTMP, an essential precursor for DNA biosynthesis. This Pseudomonas fluorescens (strain SBW25) protein is Thymidylate synthase.